A 530-amino-acid chain; its full sequence is Berberine bridge enzyme-like 22 (530 aa).

Residues 1 to 22 form the signal peptide; the sequence is MRELFMYLFLLFLVLCVKSVYS. A disulfide bridge links Cys-32 with Cys-99. N-linked (GlcNAc...) asparagine glycans are attached at residues Asn-39, Asn-47, Asn-68, Asn-75, Asn-141, and Asn-486. One can recognise an FAD-binding PCMH-type domain in the interval 77-251; sequence TSLKPILIVK…LSWKVKLARV (175 aa). Positions 114–176 form a cross-link, 6-(S-cysteinyl)-8alpha-(pros-histidyl)-FAD (His-Cys); that stretch reads HDYEGLSYLS…KIHAFAAGIC (63 aa).

This sequence belongs to the oxygen-dependent FAD-linked oxidoreductase family. The cofactor is FAD. In terms of processing, the FAD cofactor is bound via a bicovalent 6-S-cysteinyl, 8alpha-N1-histidyl FAD linkage. In terms of tissue distribution, accumulates in cell walls of etiolated hypocotyls.

The protein resides in the secreted. It is found in the cell wall. In Arabidopsis thaliana (Mouse-ear cress), this protein is Berberine bridge enzyme-like 22.